An 849-amino-acid chain; its full sequence is MGPLRQFVQNFRLLSGFGTDHRVFLDVVKACASVSDLTSGRALHGCVFKLGHIACSEVSKSVLNMYAKCRRMDDCQKMFRQMDSLDPVVWNIVLTGLSVSCGRETMRFFKAMHFADEPKPSSVTFAIVLPLCVRLGDSYNGKSMHSYIIKAGLEKDTLVGNALVSMYAKFGFIFPDAYTAFDGIADKDVVSWNAIIAGFSENNMMADAFRSFCLMLKEPTEPNYATIANVLPVCASMDKNIACRSGRQIHSYVVQRSWLQTHVFVCNSLVSFYLRVGRIEEAASLFTRMGSKDLVSWNVVIAGYASNCEWFKAFQLFHNLVHKGDVSPDSVTIISILPVCAQLTDLASGKEIHSYILRHSYLLEDTSVGNALISFYARFGDTSAAYWAFSLMSTKDIISWNAILDAFADSPKQFQFLNLLHHLLNEAITLDSVTILSLLKFCINVQGIGKVKEVHGYSVKAGLLHDEEEPKLGNALLDAYAKCGNVEYAHKIFLGLSERRTLVSYNSLLSGYVNSGSHDDAQMLFTEMSTTDLTTWSLMVRIYAESCCPNEAIGVFREIQARGMRPNTVTIMNLLPVCAQLASLHLVRQCHGYIIRGGLGDIRLKGTLLDVYAKCGSLKHAYSVFQSDARRDLVMFTAMVAGYAVHGRGKEALMIYSHMTESNIKPDHVFITTMLTACCHAGLIQDGLQIYDSIRTVHGMKPTMEQYACAVDLIARGGRLDDAYSFVTQMPVEPNANIWGTLLRACTTYNRMDLGHSVANHLLQAESDDTGNHVLISNMYAADAKWEGVMELRNLMKKKEMKKPAGCSWLEVDGQRNVFVSGDCSHPRRDSIFDLVNALYLQMKEPVVF.

PPR repeat units follow at residues aspartate 20–alanine 54, cysteine 55–valine 89, serine 121–lysine 155, aspartate 156–lysine 187, aspartate 188–proline 222, asparagine 223–glutamine 260, histidine 262–serine 296, tryptophan 297–serine 327, aspartate 329–leucine 363, aspartate 365–serine 399, tryptophan 400–leucine 430, aspartate 431–histidine 465, glutamate 469–arginine 499, threonine 501–threonine 531, aspartate 532–proline 566, asparagine 567–glycine 597, aspartate 601–arginine 631, aspartate 632–proline 666, aspartate 667–proline 702, and threonine 703–glutamate 733. Residues isoleucine 738–aspartate 813 form a type E motif region. Positions glycine 814–lysine 844 are type E(+) motif.

Belongs to the PPR family. PCMP-E subfamily.

The polypeptide is Putative pentatricopeptide repeat-containing protein At5g08490 (PCMP-E32) (Arabidopsis thaliana (Mouse-ear cress)).